A 187-amino-acid polypeptide reads, in one-letter code: BCL2/adenovirus E1B 19 kDa protein-interacting protein 3 (187 aa).

Residues 42 to 86 are disordered; it reads LDAQHESGRSSSKSSHCDSPPRSQTPQDTNRAEIDSHSFGEKNST. Phosphoserine occurs at positions 48, 60, 77, 79, 85, and 88. Residues 50–63 show a composition bias toward low complexity; it reads RSSSKSSHCDSPPR. Positions 71–81 are enriched in basic and acidic residues; it reads NRAEIDSHSFG. The BH3 motif lies at 93–118; the sequence is IERRREVESILKKNSDWIWDWSSRPE. The helical transmembrane segment at 157 to 177 threads the bilayer; that stretch reads VFLPSLLLSHLLAIGLGIYIG.

Belongs to the NIP3 family. Homodimer. Binds to BCL2. Interacts with BNIP3L and ACAA2. Interacts (via BH3 domain) with SPATA18 (via coiled-coil domains). Interacts with BOK; promotes BOK oligomerization. Interacts with PPTC7; this interaction promotes BNIP3 degradation.

Its subcellular location is the mitochondrion. It is found in the mitochondrion outer membrane. Its function is as follows. Apoptosis-inducing protein that can overcome BCL2 suppression. May play a role in repartitioning calcium between the two major intracellular calcium stores in association with BCL2. Involved in mitochondrial quality control via its interaction with SPATA18/MIEAP: in response to mitochondrial damage, participates in mitochondrial protein catabolic process (also named MALM) leading to the degradation of damaged proteins inside mitochondria. The physical interaction of SPATA18/MIEAP, BNIP3 and BNIP3L/NIX at the mitochondrial outer membrane may play a critical role in the translocation of lysosomal proteins from the cytoplasm to the mitochondrial matrix. The physical interaction of SPATA18/MIEAP, BNIP3 and BNIP3L/NIX at the mitochondrial outer membrane regulates the opening of a pore in the mitochondrial double membrane in order to mediate the translocation of lysosomal proteins from the cytoplasm to the mitochondrial matrix. Plays an important role in the calprotectin (S100A8/A9)-induced cell death pathway. This Mus musculus (Mouse) protein is BCL2/adenovirus E1B 19 kDa protein-interacting protein 3.